Here is a 348-residue protein sequence, read N- to C-terminus: Lipoyl synthase (348 aa).

[4Fe-4S] cluster contacts are provided by Cys-55, Cys-60, Cys-66, Cys-81, Cys-85, Cys-88, and Ser-292. The 215-residue stretch at Trp-67 to Ala-281 folds into the Radical SAM core domain.

It belongs to the radical SAM superfamily. Lipoyl synthase family. [4Fe-4S] cluster serves as cofactor.

It is found in the cytoplasm. It carries out the reaction [[Fe-S] cluster scaffold protein carrying a second [4Fe-4S](2+) cluster] + N(6)-octanoyl-L-lysyl-[protein] + 2 oxidized [2Fe-2S]-[ferredoxin] + 2 S-adenosyl-L-methionine + 4 H(+) = [[Fe-S] cluster scaffold protein] + N(6)-[(R)-dihydrolipoyl]-L-lysyl-[protein] + 4 Fe(3+) + 2 hydrogen sulfide + 2 5'-deoxyadenosine + 2 L-methionine + 2 reduced [2Fe-2S]-[ferredoxin]. It participates in protein modification; protein lipoylation via endogenous pathway; protein N(6)-(lipoyl)lysine from octanoyl-[acyl-carrier-protein]: step 2/2. Functionally, catalyzes the radical-mediated insertion of two sulfur atoms into the C-6 and C-8 positions of the octanoyl moiety bound to the lipoyl domains of lipoate-dependent enzymes, thereby converting the octanoylated domains into lipoylated derivatives. In Corynebacterium efficiens (strain DSM 44549 / YS-314 / AJ 12310 / JCM 11189 / NBRC 100395), this protein is Lipoyl synthase.